The primary structure comprises 119 residues: MIQKNKNFATAKAKSIRVSPRKLNLVASFIRNMKVSEALVQLTFSPKRIAKIVKDCLQSAIANAENNLGLDIDRLIITKATVGKSVVMKRIMPRAKGRATRINKFFSNLYITVTEKEDN.

Belongs to the universal ribosomal protein uL22 family. Part of the 50S ribosomal subunit.

Its function is as follows. This protein binds specifically to 23S rRNA; its binding is stimulated by other ribosomal proteins, e.g. L4, L17, and L20. It is important during the early stages of 50S assembly. It makes multiple contacts with different domains of the 23S rRNA in the assembled 50S subunit and ribosome. The globular domain of the protein is located near the polypeptide exit tunnel on the outside of the subunit, while an extended beta-hairpin is found that lines the wall of the exit tunnel in the center of the 70S ribosome. This chain is Large ribosomal subunit protein uL22, found in Rickettsia prowazekii (strain Madrid E).